The chain runs to 189 residues: dCTP deaminase, dUMP-forming (189 aa).

DCTP is bound by residues 101–106 (KSSLGR), D119, 127–129 (TLE), Q148, Y162, and Q174. The active-site Proton donor/acceptor is E129. The interval 163 to 189 (GSSEAGSKYQGQRGPTPSKAYLNFNRS) is disordered.

It belongs to the dCTP deaminase family. Homotrimer.

The catalysed reaction is dCTP + 2 H2O = dUMP + NH4(+) + diphosphate. The protein operates within pyrimidine metabolism; dUMP biosynthesis; dUMP from dCTP: step 1/1. In terms of biological role, bifunctional enzyme that catalyzes both the deamination of dCTP to dUTP and the hydrolysis of dUTP to dUMP without releasing the toxic dUTP intermediate. This Rhodococcus erythropolis (strain PR4 / NBRC 100887) protein is dCTP deaminase, dUMP-forming.